Consider the following 38-residue polypeptide: Antifungal protein 5 (38 aa).

The protein belongs to the plant LTP family.

Its function is as follows. Possesses potent antifungal activity against F.graminearum but not P.infestans. This is Antifungal protein 5 from Malva parviflora (Little mallow).